The chain runs to 523 residues: GMP synthase [glutamine-hydrolyzing] (523 aa).

Positions lysine 8–lysine 205 constitute a Glutamine amidotransferase type-1 domain. Catalysis depends on cysteine 85, which acts as the Nucleophile. Active-site residues include histidine 179 and glutamate 181. The 193-residue stretch at tryptophan 206–arginine 398 folds into the GMPS ATP-PPase domain. Serine 233–serine 239 provides a ligand contact to ATP.

Homodimer.

It carries out the reaction XMP + L-glutamine + ATP + H2O = GMP + L-glutamate + AMP + diphosphate + 2 H(+). The protein operates within purine metabolism; GMP biosynthesis; GMP from XMP (L-Gln route): step 1/1. Catalyzes the synthesis of GMP from XMP. This Haemophilus influenzae (strain ATCC 51907 / DSM 11121 / KW20 / Rd) protein is GMP synthase [glutamine-hydrolyzing] (guaA).